The sequence spans 92 residues: Putative phosphotransferase enzyme IIB component BB_0367 (92 aa).

The 83-residue stretch at 10-92 folds into the PTS EIIB type-1 domain; the sequence is IKVAEHIVEC…ILYMMNEQKQ (83 aa).

It is found in the cytoplasm. In terms of biological role, the phosphoenolpyruvate-dependent sugar phosphotransferase system (PTS), a major carbohydrate active -transport system, catalyzes the phosphorylation of incoming sugar substrates concomitant with their translocation across the cell membrane. The chain is Putative phosphotransferase enzyme IIB component BB_0367 from Borreliella burgdorferi (strain ATCC 35210 / DSM 4680 / CIP 102532 / B31) (Borrelia burgdorferi).